Consider the following 275-residue polypeptide: Nitrate import permease protein NrtB (275 aa).

Transmembrane regions (helical) follow at residues 25 to 45 (VIRP…LCSG), 89 to 109 (VAVG…LIGS), 120 to 140 (IFQV…LAAL), 147 to 167 (AIFV…TVGA), 189 to 209 (FFNI…RIGI), 213 to 233 (WLAI…FFIW), and 238 to 258 (SSLI…GLLL). In terms of domain architecture, ABC transmembrane type-1 spans 82–262 (IFASLTRVAV…IVGLLLDRFI (181 aa)).

It belongs to the binding-protein-dependent transport system permease family. CysTW subfamily. In terms of assembly, the complex is composed of two ATP-binding proteins (NrtC and NrtD), two transmembrane proteins (NrtB) and a solute-binding protein (NrtA).

The protein resides in the cell inner membrane. Its function is as follows. Part of the ABC transporter complex NrtABCD involved in nitrate uptake. The complex is probably also involved in nitrite transport. Probably responsible for the translocation of the substrate across the membrane. This Synechocystis sp. (strain ATCC 27184 / PCC 6803 / Kazusa) protein is Nitrate import permease protein NrtB (nrtB).